Consider the following 405-residue polypeptide: Arginine biosynthesis bifunctional protein ArgJ (405 aa).

6 residues coordinate substrate: threonine 152, lysine 178, threonine 189, glutamate 276, asparagine 400, and threonine 405. The active-site Nucleophile is the threonine 189.

It belongs to the ArgJ family. In terms of assembly, heterotetramer of two alpha and two beta chains.

It localises to the cytoplasm. The enzyme catalyses N(2)-acetyl-L-ornithine + L-glutamate = N-acetyl-L-glutamate + L-ornithine. It carries out the reaction L-glutamate + acetyl-CoA = N-acetyl-L-glutamate + CoA + H(+). The protein operates within amino-acid biosynthesis; L-arginine biosynthesis; L-ornithine and N-acetyl-L-glutamate from L-glutamate and N(2)-acetyl-L-ornithine (cyclic): step 1/1. It functions in the pathway amino-acid biosynthesis; L-arginine biosynthesis; N(2)-acetyl-L-ornithine from L-glutamate: step 1/4. In terms of biological role, catalyzes two activities which are involved in the cyclic version of arginine biosynthesis: the synthesis of N-acetylglutamate from glutamate and acetyl-CoA as the acetyl donor, and of ornithine by transacetylation between N(2)-acetylornithine and glutamate. The protein is Arginine biosynthesis bifunctional protein ArgJ of Pseudomonas syringae pv. tomato (strain ATCC BAA-871 / DC3000).